A 591-amino-acid polypeptide reads, in one-letter code: L-fucose isomerase (591 aa).

Catalysis depends on proton acceptor residues E338 and D362. E338, D362, and H529 together coordinate Mn(2+).

Belongs to the L-fucose isomerase family. Mn(2+) is required as a cofactor.

Its subcellular location is the cytoplasm. It catalyses the reaction L-fucose = L-fuculose. It participates in carbohydrate degradation; L-fucose degradation; L-lactaldehyde and glycerone phosphate from L-fucose: step 1/3. Functionally, converts the aldose L-fucose into the corresponding ketose L-fuculose. The polypeptide is L-fucose isomerase (Phocaeicola vulgatus (strain ATCC 8482 / DSM 1447 / JCM 5826 / CCUG 4940 / NBRC 14291 / NCTC 11154) (Bacteroides vulgatus)).